A 337-amino-acid chain; its full sequence is UPF0284 protein AF_0276 (337 aa).

This sequence belongs to the UPF0284 family.

The chain is UPF0284 protein AF_0276 from Archaeoglobus fulgidus (strain ATCC 49558 / DSM 4304 / JCM 9628 / NBRC 100126 / VC-16).